The primary structure comprises 373 residues: Dual-specificity RNA methyltransferase RlmN (373 aa).

E94 serves as the catalytic Proton acceptor. A Radical SAM core domain is found at 100–339 (EDDRATLCVS…VIVRKTRGDD (240 aa)). A disulfide bond links C107 and C344. [4Fe-4S] cluster-binding residues include C114, C118, and C121. S-adenosyl-L-methionine is bound by residues 168–169 (GE), S200, 222–224 (SIH), and N301. C344 acts as the S-methylcysteine intermediate in catalysis.

It belongs to the radical SAM superfamily. RlmN family. Requires [4Fe-4S] cluster as cofactor.

It localises to the cytoplasm. The enzyme catalyses adenosine(2503) in 23S rRNA + 2 reduced [2Fe-2S]-[ferredoxin] + 2 S-adenosyl-L-methionine = 2-methyladenosine(2503) in 23S rRNA + 5'-deoxyadenosine + L-methionine + 2 oxidized [2Fe-2S]-[ferredoxin] + S-adenosyl-L-homocysteine. It carries out the reaction adenosine(37) in tRNA + 2 reduced [2Fe-2S]-[ferredoxin] + 2 S-adenosyl-L-methionine = 2-methyladenosine(37) in tRNA + 5'-deoxyadenosine + L-methionine + 2 oxidized [2Fe-2S]-[ferredoxin] + S-adenosyl-L-homocysteine. Specifically methylates position 2 of adenine 2503 in 23S rRNA and position 2 of adenine 37 in tRNAs. m2A2503 modification seems to play a crucial role in the proofreading step occurring at the peptidyl transferase center and thus would serve to optimize ribosomal fidelity. The chain is Dual-specificity RNA methyltransferase RlmN from Shewanella woodyi (strain ATCC 51908 / MS32).